Reading from the N-terminus, the 504-residue chain is Cytochrome P450 2D10 (504 aa).

A Phosphoserine modification is found at Ser249. Cys446 provides a ligand contact to heme.

It belongs to the cytochrome P450 family. Requires heme as cofactor.

It localises to the endoplasmic reticulum membrane. Its subcellular location is the microsome membrane. It carries out the reaction an organic molecule + reduced [NADPH--hemoprotein reductase] + O2 = an alcohol + oxidized [NADPH--hemoprotein reductase] + H2O + H(+). Functionally, cytochromes P450 are a group of heme-thiolate monooxygenases. In liver microsomes, this enzyme is involved in an NADPH-dependent electron transport pathway. It oxidizes a variety of structurally unrelated compounds, including steroids, fatty acids, and xenobiotics. This is Cytochrome P450 2D10 (Cyp2d10) from Mus musculus (Mouse).